We begin with the raw amino-acid sequence, 317 residues long: Melanocyte-stimulating hormone receptor (317 aa).

Residues 1–37 (MAVQGFQRRLLGSLNSTPTAIPQLGLAANQTGARCLE) lie on the Extracellular side of the membrane. Residue Asn-29 is glycosylated (N-linked (GlcNAc...) asparagine). Residues 38 to 63 (VSIPDGLFLSLGLVSLVENVLVVATI) form a helical membrane-spanning segment. The Cytoplasmic segment spans residues 64–72 (AKNRNLHSP). The chain crosses the membrane as a helical span at residues 73-93 (TYCFICCLALSDLLVSGGNVL). Topologically, residues 94–118 (ETVVILLLEASALAARAAVVQPLDN) are extracellular. A helical transmembrane segment spans residues 119 to 140 (VIDVITCSSMVSSLCFLGAIAM). The Cytoplasmic portion of the chain corresponds to 141–163 (DRYVSIFYALRYHSIVTLPRARQ). A helical membrane pass occupies residues 164–183 (AIAAIWVASVLFSTLFIAYY). The Extracellular portion of the chain corresponds to 184-191 (DHAAVLLC). A helical transmembrane segment spans residues 192 to 211 (LVVFFLAMLVLMAVLYVHML). The Cytoplasmic segment spans residues 212–240 (ARACQHAQGIARLHKRQRPLHQGFGLKGA). Residues 241 to 266 (VTLTILLGIFFLCWGPFFLHLTLIVL) form a helical membrane-spanning segment. Topologically, residues 267–279 (CPQHPTCSCIFKN) are extracellular. The helical transmembrane segment at 280–300 (FNLFLTLIICNAIIDPLIYAF) threads the bilayer. The Cytoplasmic portion of the chain corresponds to 301–317 (RRQELRRTLKEGLTCSW). Cys-315 carries S-palmitoyl cysteine lipidation.

This sequence belongs to the G-protein coupled receptor 1 family. As to quaternary structure, interacts with MGRN1, but does not undergo MGRN1-mediated ubiquitination; this interaction competes with GNAS-binding and thus inhibits agonist-induced cAMP production. Interacts with OPN3; the interaction results in a decrease in MC1R-mediated cAMP signaling and ultimately a decrease in melanin production in melanocytes.

It localises to the cell membrane. Functionally, receptor for MSH (alpha, beta and gamma) and ACTH. The activity of this receptor is mediated by G proteins which activate adenylate cyclase. Mediates melanogenesis, the production of eumelanin (black/brown) and phaeomelanin (red/yellow), via regulation of cAMP signaling in melanocytes. In Hylobates lar (Lar gibbon), this protein is Melanocyte-stimulating hormone receptor (MC1R).